Here is a 64-residue protein sequence, read N- to C-terminus: Disintegrin VB7A (64 aa).

A Disintegrin domain is found at 1-64 (NSGNPCCDPV…SDCPRNPYKD (64 aa)). Cystine bridges form between Cys-6–Cys-29, Cys-20–Cys-26, Cys-25–Cys-50, and Cys-38–Cys-57. Positions 42 to 44 (RGD) match the Cell attachment site motif.

Belongs to the disintegrin family. Dimeric disintegrin subfamily. As to quaternary structure, heterodimer with VB7B; disulfide-linked. In terms of tissue distribution, expressed by the venom gland.

The protein resides in the secreted. In terms of biological role, poor inhibitor of platelet aggregation. The disintegrin inhibits the adhesion of cells expressing the RGD-dependent integrin alpha-5/beta-1 (ITGA5/ITGB1) to immobilized fibronectin. Inhibition on alpha-2b/beta-3 (ITGA2B/ITGB3) is low. This is Disintegrin VB7A from Vipera berus berus (Common viper).